The chain runs to 80 residues: Large ribosomal subunit protein uL30 (80 aa).

Belongs to the universal ribosomal protein uL30 family. As to quaternary structure, part of the 50S ribosomal subunit.

This chain is Large ribosomal subunit protein uL30, found in Vesicomyosocius okutanii subsp. Calyptogena okutanii (strain HA).